Consider the following 279-residue polypeptide: NADPH-dependent 7-cyano-7-deazaguanine reductase (279 aa).

86 to 88 (IES) provides a ligand contact to substrate. 88 to 89 (SK) is a binding site for NADPH. C187 serves as the catalytic Thioimide intermediate. The active-site Proton donor is D194. Residue 226-227 (HE) coordinates substrate. Position 255–256 (255–256 (RG)) interacts with NADPH.

The protein belongs to the GTP cyclohydrolase I family. QueF type 2 subfamily. Homodimer.

It localises to the cytoplasm. The catalysed reaction is 7-aminomethyl-7-carbaguanine + 2 NADP(+) = 7-cyano-7-deazaguanine + 2 NADPH + 3 H(+). The protein operates within tRNA modification; tRNA-queuosine biosynthesis. In terms of biological role, catalyzes the NADPH-dependent reduction of 7-cyano-7-deazaguanine (preQ0) to 7-aminomethyl-7-deazaguanine (preQ1). The sequence is that of NADPH-dependent 7-cyano-7-deazaguanine reductase from Actinobacillus pleuropneumoniae serotype 5b (strain L20).